The following is a 615-amino-acid chain: Zinc finger protein 653 (615 aa).

Disordered stretches follow at residues 1 to 46, 93 to 115, and 174 to 235; these read MAER…ARRR, RSGR…KRRR, and PLSD…SGLI. The segment covering 7–25 has biased composition (low complexity); the sequence is EPGAEAEAGAGGEAAAEEG. Over residues 106 to 115 the composition is skewed to basic residues; the sequence is KKPKRKKRRR. Composition is skewed to low complexity over residues 192-203 and 212-232; these read GSSDSSSSGSSS and QPAK…TGSS. 5 C2H2-type zinc fingers span residues 467-492, 498-522, 528-550, 556-578, and 586-609; these read FHCP…NLVH, KVCP…MIIH, FTCE…RRTH, LQCE…MKKH, and FTCD…LKSH.

This sequence belongs to the krueppel C2H2-type zinc-finger protein family. Interacts with NR5A1. In terms of tissue distribution, highly expressed in testis and spleen. Moderately expressed in lung, adrenal gland, uterus, and ovary. Very low expression in pancreas, heart, skeletal muscle, adipose tissue, kidney, and liver.

It localises to the nucleus. In terms of biological role, transcriptional repressor. May repress NR5A1, PPARG, NR1H3, NR4A2, ESR1 and NR3C1 transcriptional activity. The polypeptide is Zinc finger protein 653 (Znf653) (Mus musculus (Mouse)).